Reading from the N-terminus, the 262-residue chain is Small ribosomal subunit protein uS2 (262 aa).

Belongs to the universal ribosomal protein uS2 family.

This Borreliella burgdorferi (strain ZS7) (Borrelia burgdorferi) protein is Small ribosomal subunit protein uS2.